An 83-amino-acid chain; its full sequence is Sulfur carrier protein TusA (83 aa).

The active-site Cysteine persulfide intermediate is the C19.

The protein belongs to the sulfur carrier protein TusA family.

Its subcellular location is the cytoplasm. Sulfur carrier protein which probably makes part of a sulfur-relay system. In Aliivibrio salmonicida (strain LFI1238) (Vibrio salmonicida (strain LFI1238)), this protein is Sulfur carrier protein TusA.